Here is an 83-residue protein sequence, read N- to C-terminus: Apolipoprotein C-I, basic form (83 aa).

The signal sequence occupies residues 1 to 26 (MRLFLSLPVLVVVLSMVLEGPAPAQG).

Belongs to the apolipoprotein C1 family.

The protein localises to the secreted. Its function is as follows. Inhibitor of lipoprotein binding to the low density lipoprotein (LDL) receptor, LDL receptor-related protein, and very low density lipoprotein (VLDL) receptor. Associates with high density lipoproteins (HDL) and the triacylglycerol-rich lipoproteins in the plasma and makes up about 10% of the protein of the VLDL and 2% of that of HDL. Appears to interfere directly with fatty acid uptake and is also the major plasma inhibitor of cholesteryl ester transfer protein (CETP). Binds free fatty acids and reduces their intracellular esterification. Modulates the interaction of APOE with beta-migrating VLDL and inhibits binding of beta-VLDL to the LDL receptor-related protein. The chain is Apolipoprotein C-I, basic form (APOC1B) from Colobus guereza (Mantled guereza).